Reading from the N-terminus, the 269-residue chain is Staphylococcal secretory antigen ssaA2 (269 aa).

An N-terminal signal peptide occupies residues 1–27; it reads MKKIATATIATAGFATIAIASGNQAHA. A run of 7 repeats spans residues 83–85, 88–90, 91–93, 97–99, 103–105, 106–108, and 115–117. The tract at residues 83 to 115 is 7 X 3 AA repeats of Y-[NS]-N; it reads YNNYSYNNYNNGYSYNNYSRYNNYSNNNQSYNY. One can recognise a Peptidase C51 domain in the interval 148 to 269; the sequence is MAPSSNGRSI…SQAAGYNFIH (122 aa).

Its subcellular location is the secreted. Functionally, not known; immunogenic protein. The sequence is that of Staphylococcal secretory antigen ssaA2 (ssaA2) from Staphylococcus aureus (strain MRSA252).